A 360-amino-acid chain; its full sequence is Farnesyl pyrophosphate synthase (360 aa).

Isopentenyl diphosphate-binding residues include Lys-52, Arg-55, and Gln-90. Asp-97 and Asp-101 together coordinate Mg(2+). Arg-106 serves as a coordination point for dimethylallyl diphosphate. Arg-107 contributes to the isopentenyl diphosphate binding site. Positions 194, 195, 237, 254, and 263 each coordinate dimethylallyl diphosphate.

Belongs to the FPP/GGPP synthase family. Mg(2+) is required as a cofactor.

The enzyme catalyses isopentenyl diphosphate + dimethylallyl diphosphate = (2E)-geranyl diphosphate + diphosphate. The catalysed reaction is isopentenyl diphosphate + (2E)-geranyl diphosphate = (2E,6E)-farnesyl diphosphate + diphosphate. It participates in isoprenoid biosynthesis; farnesyl diphosphate biosynthesis; farnesyl diphosphate from geranyl diphosphate and isopentenyl diphosphate: step 1/1. The protein operates within isoprenoid biosynthesis; geranyl diphosphate biosynthesis; geranyl diphosphate from dimethylallyl diphosphate and isopentenyl diphosphate: step 1/1. Farnesyl pyrophosphate synthase; part of the second module of ergosterol biosynthesis pathway that includes the middle steps of the pathway. The second module involves the formation of farnesyl diphosphate, which is also an important intermediate in the biosynthesis of ubiquinone, dolichol, heme and prenylated proteins. This module also plays a key role in the biosynthesis of triterpenes such as ganoderic acids (GA), a group of highly oxygenated lanostane-type triterpenoids which are well recognized as a main group of unique bioactive compounds in the medicinal mushroom Ganoderma lucidum. Activity by the mevalonate kinase first converts mevalonate into 5-phosphomevalonate. 5-phosphomevalonate is then further converted to 5-diphosphomevalonate by the phosphomevalonate kinase. The diphosphomevalonate decarboxylase MVD then produces isopentenyl diphosphate. The isopentenyl-diphosphate delta-isomerase then catalyzes the 1,3-allylic rearrangement of the homoallylic substrate isopentenyl (IPP) to its highly electrophilic allylic isomer, dimethylallyl diphosphate (DMAPP). Finally the farnesyl diphosphate synthase FPS catalyzes the sequential condensation of isopentenyl pyrophosphate with dimethylallyl pyrophosphate, and then with the resultant geranylpyrophosphate to the ultimate product farnesyl pyrophosphate. This chain is Farnesyl pyrophosphate synthase, found in Ganoderma lucidum (Ling zhi medicinal fungus).